Here is a 281-residue protein sequence, read N- to C-terminus: CCAAT/enhancer-binding protein epsilon (281 aa).

A disordered region spans residues 1-30 (MSHGTYYECEPRGGQQPLEFSGGRAGPGEL). A Glycyl lysine isopeptide (Lys-Gly) (interchain with G-Cter in SUMO2) cross-link involves residue lysine 121. Position 181 is a phosphoserine (serine 181). Positions 204–267 (SLEYRLRRER…DTLRNLFRQI (64 aa)) constitute a bZIP domain. The segment at 208–228 (RLRRERNNIAVRKSRDKAKRR) is basic motif. The leucine-zipper stretch occupies residues 230–237 (LETQQKVL).

It belongs to the bZIP family. C/EBP subfamily. In terms of assembly, binds DNA as a homodimer and as a heterodimer. Can form stable heterodimers with CEBPA, CEBPB and CEBPD. Interacts with GATA1 and SPI1. Interacts with SMARCD2. Phosphorylated. As to expression, strongest expression occurs in promyelocyte and late-myeloblast-like cell lines.

The protein resides in the nucleus. Its function is as follows. Transcriptional activator. C/EBP are DNA-binding proteins that recognize two different motifs: the CCAAT homology common to many promoters and the enhanced core homology common to many enhancers. Required for the promyelocyte-myelocyte transition in myeloid differentiation. The sequence is that of CCAAT/enhancer-binding protein epsilon (CEBPE) from Homo sapiens (Human).